The primary structure comprises 243 residues: Glutathione S-transferase omega-2 (243 aa).

The GST N-terminal domain occupies Gly22–Lys101. Cys32 acts as the Nucleophile in catalysis. Glutathione contacts are provided by residues Lys59, Ile72, and Glu85–Ser86. One can recognise a GST C-terminal domain in the interval Asp106–Phe231.

The protein belongs to the GST superfamily. Omega family. Expressed in a range of tissues, including the liver, kidney, skeletal muscle and prostate. Strongest expression in the testis.

The enzyme catalyses RX + glutathione = an S-substituted glutathione + a halide anion + H(+). The catalysed reaction is L-dehydroascorbate + 2 glutathione = glutathione disulfide + L-ascorbate. It catalyses the reaction methylarsonate + 2 glutathione + H(+) = methylarsonous acid + glutathione disulfide + H2O. Its function is as follows. Exhibits glutathione-dependent thiol transferase activity. Has high dehydroascorbate reductase activity and may contribute to the recycling of ascorbic acid. Participates in the biotransformation of inorganic arsenic and reduces monomethylarsonic acid (MMA). This Homo sapiens (Human) protein is Glutathione S-transferase omega-2 (GSTO2).